The sequence spans 152 residues: Venom protein family 1 protein 2 (152 aa).

The N-terminal stretch at 1 to 21 (MAKLVFISFLVASFCLIGCFG) is a signal peptide. A disulfide bridge connects residues Cys70 and Cys150.

It belongs to the insect vpf1 family. In terms of tissue distribution, expressed by the venom gland (posterior main gland) (at protein level).

The protein localises to the secreted. This is Venom protein family 1 protein 2 from Platymeris rhadamanthus (Red spot assassin bug).